Consider the following 439-residue polypeptide: Trigger factor (439 aa).

The region spanning 165 to 250 (GDFAKFDFEG…LHEIQELKLP (86 aa)) is the PPIase FKBP-type domain.

The protein belongs to the FKBP-type PPIase family. Tig subfamily.

Its subcellular location is the cytoplasm. The catalysed reaction is [protein]-peptidylproline (omega=180) = [protein]-peptidylproline (omega=0). Functionally, involved in protein export. Acts as a chaperone by maintaining the newly synthesized protein in an open conformation. Functions as a peptidyl-prolyl cis-trans isomerase. This is Trigger factor from Campylobacter lari (strain RM2100 / D67 / ATCC BAA-1060).